Reading from the N-terminus, the 1733-residue chain is DNA-directed RNA polymerase II subunit RPB1 (1733 aa).

Zn(2+) contacts are provided by Cys-67, Cys-70, Cys-77, His-80, Cys-107, Cys-110, Cys-148, and Cys-167. The segment at 248 to 260 (PSISFNESQRGED) is lid loop. Residues 306–323 (NDIAGQPQALQKSGRPVK) are rudder loop. Asp-481, Asp-483, and Asp-485 together coordinate Mg(2+). Residue Lys-695 forms a Glycyl lysine isopeptide (Lys-Gly) (interchain with G-Cter in ubiquitin) linkage. Residues 810–822 (PQEFFFHAMGGRE) form a bridging helix region. Residues Lys-1246 and Lys-1350 each participate in a glycyl lysine isopeptide (Lys-Gly) (interchain with G-Cter in ubiquitin) cross-link. Thr-1471 bears the Phosphothreonine mark. The interval 1537–1733 (VSSPGFSPTS…QKHNENENSR (197 aa)) is disordered. The segment covering 1538–1719 (SSPGFSPTSP…YSPGSPAYSP (182 aa)) has biased composition (low complexity). 23 tandem repeats follow at residues 1549-1555 (YSPTSPA), 1556-1562 (YSPTSPS), 1563-1569 (YSPTSPS), 1570-1576 (YSPTSPS), 1577-1583 (YSPTSPS), 1584-1590 (YSPTSPS), 1591-1597 (YSPTSPS), 1598-1604 (YSPTSPS), 1605-1611 (YSPTSPS), 1612-1618 (YSPTSPS), 1619-1625 (YSPTSPS), 1626-1632 (YSPTSPS), 1633-1639 (YSPTSPS), 1640-1646 (YSPTSPS), 1647-1653 (YSPTSPS), 1654-1660 (YSPTSPA), 1661-1667 (YSPTSPS), 1668-1674 (YSPTSPS), 1675-1681 (YSPTSPS), 1682-1688 (YSPTSPS), 1689-1695 (YSPTSPN), 1696-1702 (YSPTSPS), and 1703-1709 (YSPTSPG). The C-terminal domain (CTD); 24 X 7 AA approximate tandem repeats of Y-S-P-T-S-P-[A-S-N-G] stretch occupies residues 1549–1716 (YSPTSPAYSP…SPGYSPGSPA (168 aa)). Residues 1710-1716 (YSPGSPA) form a 24; approximate repeat. A compositionally biased stretch (basic and acidic residues) spans 1720–1733 (KQDEQKHNENENSR).

Belongs to the RNA polymerase beta' chain family. Component of the RNA polymerase II (Pol II) complex consisting of 12 subunits. Interacts with DEF1; the interaction is direct and serves to bridge RPB1 to the Elongin complex in a DNA-damaged dependent manner. Interacts with the Elongin subunit ELA1. Interacts with the Elongin subunit ELC1. Interacts with ASK10. Interacts with ESS1. Interacts with RTT103. Interacts with SHE2. The tandem 7 residues repeats in the C-terminal domain (CTD) can be highly phosphorylated. The phosphorylation activates Pol II. Phosphorylation occurs mainly at residues 'Ser-2' and 'Ser-5' of the heptapeptide repeat. The phosphorylated form of Pol II appears to carry, on average, one phosphate per repeat. The phosphorylation state is believed to result from the balanced action of site-specific CTD kinases and phosphatases, and a 'CTD code' that specifies the position of Pol II within the transcription cycle has been proposed. Phosphorylation at 'Ser-5' occurs in promoter-proximal regions in early elongation. Phosphorylation at 'Ser-2' predominates in regions more distal to the promoter and triggers binding of the 3' RNA processing machinery. CTD kinases include KIN28 (as part of the TFKII complex, a subcomplex of the TFIIH holo complex), SSN3/SRB10 (as part of the SRB8-11 complex, a module of the Mediator complex), CTK1 (as part of CTD kinase), and probably BUR1 (as part of the BUR1-BUR2 kinase complex). Phosphatases include FCP1 and SSU72. Post-translationally, following transcription stress, the elongating form of RNA polymerase II (RNA pol IIo) is polyubiquitinated via 'Lys-63'-linkages on Lys-1246 by the RSP5-UBA1-UBC5 complex at DNA damage sites without leading to degradation: ubiquitination promotes RNA pol IIo backtracking to allow access by the transcription-coupled nucleotide excision repair (TC-NER) machinery. Subsequent DEF1-dependent polyubiquitination by the elongin complex via 'Lys-48'-linkages may lead to proteasome-mediated degradation; presumably at stalled RNA pol II where TC-NER has failed, to halt global transcription and enable 'last resort' DNA repair pathways.

It is found in the nucleus. The enzyme catalyses RNA(n) + a ribonucleoside 5'-triphosphate = RNA(n+1) + diphosphate. Its function is as follows. DNA-dependent RNA polymerase catalyzes the transcription of DNA into RNA using the four ribonucleoside triphosphates as substrates. Largest and catalytic component of RNA polymerase II which synthesizes mRNA precursors and many functional non-coding RNAs. Forms the polymerase active center together with the second largest subunit. Pol II is the central component of the basal RNA polymerase II transcription machinery. During a transcription cycle, Pol II, general transcription factors and the Mediator complex assemble as the preinitiation complex (PIC) at the promoter. 11-15 base pairs of DNA surrounding the transcription start site are melted and the single-stranded DNA template strand of the promoter is positioned deeply within the central active site cleft of Pol II to form the open complex. After synthesis of about 30 bases of RNA, Pol II releases its contacts with the core promoter and the rest of the transcription machinery (promoter clearance) and enters the stage of transcription elongation in which it moves on the template as the transcript elongates. Pol II appears to oscillate between inactive and active conformations at each step of nucleotide addition. Elongation is influenced by the phosphorylation status of the C-terminal domain (CTD) of Pol II largest subunit (RPB1), which serves as a platform for assembly of factors that regulate transcription initiation, elongation, termination and mRNA processing. Pol II is composed of mobile elements that move relative to each other. The core element with the central large cleft comprises RPB3, RBP10, RPB11, RPB12 and regions of RPB1 and RPB2 forming the active center. The clamp element (portions of RPB1, RPB2 and RPB3) is connected to the core through a set of flexible switches and moves to open and close the cleft. A bridging helix emanates from RPB1 and crosses the cleft near the catalytic site and is thought to promote translocation of Pol II by acting as a ratchet that moves the RNA-DNA hybrid through the active site by switching from straight to bent conformations at each step of nucleotide addition. In elongating Pol II, the lid loop (RPB1) appears to act as a wedge to drive apart the DNA and RNA strands at the upstream end of the transcription bubble and guide the RNA strand toward the RNA exit groove located near the base of the largely unstructured CTD domain of RPB1. The rudder loop (RPB1) interacts with single-stranded DNA after separation from the RNA strand, likely preventing reassociation with the exiting RNA. The cleft is surrounded by jaws: an upper jaw formed by portions of RBP1, RPB2 and RPB9, and a lower jaw, formed by RPB5 and portions of RBP1. The jaws are thought to grab the incoming DNA template, mainly by RPB5 direct contacts to DNA. The protein is DNA-directed RNA polymerase II subunit RPB1 (RPO21) of Saccharomyces cerevisiae (strain ATCC 204508 / S288c) (Baker's yeast).